We begin with the raw amino-acid sequence, 593 residues long: NADH-quinone oxidoreductase subunit C/D 1 (593 aa).

Residues 1–193 are NADH dehydrogenase I subunit C; that stretch reads MPWAKEGDLQ…DNLEGLMNYD (193 aa). Positions 217-593 are NADH dehydrogenase I subunit D; the sequence is AQIVLNWGPL…IDPVVGETDR (377 aa).

The protein in the N-terminal section; belongs to the complex I 30 kDa subunit family. It in the C-terminal section; belongs to the complex I 49 kDa subunit family. NDH-1 is composed of 13 different subunits. Subunits NuoB, CD, E, F, and G constitute the peripheral sector of the complex.

It localises to the cell inner membrane. It catalyses the reaction a quinone + NADH + 5 H(+)(in) = a quinol + NAD(+) + 4 H(+)(out). NDH-1 shuttles electrons from NADH, via FMN and iron-sulfur (Fe-S) centers, to quinones in the respiratory chain. The immediate electron acceptor for the enzyme in this species is believed to be ubiquinone. Couples the redox reaction to proton translocation (for every two electrons transferred, four hydrogen ions are translocated across the cytoplasmic membrane), and thus conserves the redox energy in a proton gradient. This chain is NADH-quinone oxidoreductase subunit C/D 1 (nuoC1), found in Aquifex aeolicus (strain VF5).